The chain runs to 177 residues: Bifunctional protein PyrR (177 aa).

Residues valine 99–threonine 111 carry the PRPP-binding motif.

It belongs to the purine/pyrimidine phosphoribosyltransferase family. PyrR subfamily.

The enzyme catalyses UMP + diphosphate = 5-phospho-alpha-D-ribose 1-diphosphate + uracil. In terms of biological role, regulates the transcription of the pyrimidine nucleotide (pyr) operon in response to exogenous pyrimidines. Also displays a weak uracil phosphoribosyltransferase activity which is not physiologically significant. This Gloeothece citriformis (strain PCC 7424) (Cyanothece sp. (strain PCC 7424)) protein is Bifunctional protein PyrR.